The primary structure comprises 556 residues: uncharacterized protein (556 aa).

The chain crosses the membrane as a helical span at residues 16–36 (LFWTIGVLGAGALTTFSAVMI).

The protein localises to the membrane. This is an uncharacterized protein from Mycoplasma genitalium (strain ATCC 33530 / DSM 19775 / NCTC 10195 / G37) (Mycoplasmoides genitalium).